Reading from the N-terminus, the 548-residue chain is Natural resistance-associated macrophage protein 1 (548 aa).

The tract at residues 1-38 (MPGDMGPPKQGGTRYGSISSPPSPGPQQAPPGGTYLSE) is disordered. The Cytoplasmic segment spans residues 1–55 (MPGDMGPPKQGGTRYGSISSPPSPGPQQAPPGGTYLSEKIPIPDTESGAFSLRKL). A helical membrane pass occupies residues 56 to 73 (WAFTGPGFLMSIAFLDPG). Residues 74 to 82 (NIESDLQAG) lie on the Extracellular side of the membrane. Residues 83–102 (AVAGFKLLWVLLWATVLGLL) traverse the membrane as a helical segment. Residues 103 to 139 (CQRLAARLGVVTGKDLGEVCHLYYPKVPRILLWLTIE) lie on the Cytoplasmic side of the membrane. The chain crosses the membrane as a helical span at residues 140-160 (LAIVGSDMQEVIGTAIAFSLL). The Extracellular segment spans residues 161–164 (SAGR). The chain crosses the membrane as a helical span at residues 165–184 (IPLWGGVLITIVDTFFFLFL). At 185–193 (DNYGLRKLE) the chain is on the cytoplasmic side. A helical transmembrane segment spans residues 194–214 (AFFGFLITIMALTFGYEYVVA). Over 215-237 (RPAQGALLQGLFLPSCAGCGQPE) the chain is Extracellular. The helical transmembrane segment at 238-256 (LLQAVGIVGAIIMPHNIYL) threads the bilayer. The Cytoplasmic segment spans residues 257–284 (HSSLVKSREVDRSRRADIREANMYFLIE). Residues 285 to 304 (ATIALSVSFLINLFVMAVFG) form a helical membrane-spanning segment. At 305–346 (QAFYKQTNQAAFNICANSSLHDYATIFPRNNLTVAVDIYQGG) the chain is on the extracellular side. 2 N-linked (GlcNAc...) asparagine glycosylation sites follow: Asn321 and Asn335. The helical transmembrane segment at 347–366 (VILGCLFGPAALYIWAVGLL) threads the bilayer. Topologically, residues 367-397 (AAGQSSTMTGTYAGQFVMEGFLKLRWSRFAR) are cytoplasmic. A helical transmembrane segment spans residues 398 to 415 (VLLTRSCAILPTVLVAVF). Residues 416 to 426 (RDLRDLSGLND) are Extracellular-facing. The chain crosses the membrane as a helical span at residues 427–447 (LLNVLQSLLLPFAVLPILTFT). Residues 448 to 463 (SMPAVMQEFANGLVSK) are Cytoplasmic-facing. Residues 464–485 (VISSSIMVLVCAVNLYFVISYV) traverse the membrane as a helical segment. Residues 486-493 (PSLPHPDY) lie on the Extracellular side of the membrane. Residues 494 to 513 (FSLVALLAAAYLGLTTYLVW) traverse the membrane as a helical segment. Residues 514–548 (TCLITQGATLLAHSSHQRFLYGLPEEDQENGRTSG) are Cytoplasmic-facing.

This sequence belongs to the NRAMP family.

It localises to the late endosome membrane. It is found in the lysosome membrane. It catalyses the reaction Zn(2+)(in) + H(+)(out) = Zn(2+)(out) + H(+)(in). The catalysed reaction is Fe(2+)(in) + H(+)(out) = Fe(2+)(out) + H(+)(in). The enzyme catalyses Mn(2+)(in) + H(+)(out) = Mn(2+)(out) + H(+)(in). Functionally, macrophage-specific antiporter that fluxes metal ions in either direction against a proton gradient. Localized to late endosomal lysosomal membranes, delivers bivalent cations from the cytosol into these acidic compartments where they may directly affect antimicrobial activity. Involved in iron metabolism and host natural resistance to infection with intracellular parasites. Pathogen resistance involves sequestration of Fe(2+) and Mn(2+), cofactors of both prokaryotic and eukaryotic catalases and superoxide dismutases, not only to protect the macrophage against its own generation of reactive oxygen species, but to deny the cations to the pathogen for synthesis of its protective enzymes. The sequence is that of Natural resistance-associated macrophage protein 1 (SLC11A1) from Cervus elaphus (Red deer).